We begin with the raw amino-acid sequence, 447 residues long: MPVSVSDSFVFRNIFGDAEIRKIWSDENRTQEYLNWEAALARAEASLGIIPKYAGEEIQRVCKVENIDFSKLEEETINIGYPVLGVVHQLANLCSGDSGKYCHWGATTQDVTDSATVRQMIDSFKIIKGYLEKAIELATVLVIKHRETTMAGRSNLQQAVPITFGFKMARFVATLRRHHQRLCELLPRVSVLEFGGACGTLASLENKGLMVQQKLAEELGLLQPEIAWHTERDRIAEAGCFLGMLTGTLAKFATDIKLLMQTEVAEVFEPFKANRGSSSTMPQKRNPISCVYITASTSFVRQGVAALLDAMVEDHERATGAWEIEWIVLPDVFVHTVGTLKQTVFLLEGLEVHPSRMNENLSITNGLIVSEAVMMALAPKLGRDEAHDLVYRLCHLSIQENKPLVELLLAERQVTNYLSKEEVTSLLNPENYLGSTFEMIERALQIP.

It belongs to the class-II fumarase/aspartase family.

Its subcellular location is the cytoplasm. It is found in the nucleus. This is an uncharacterized protein from Schizosaccharomyces pombe (strain 972 / ATCC 24843) (Fission yeast).